The primary structure comprises 144 residues: Large ribosomal subunit protein uL15 (144 aa).

The segment at 1–54 is disordered; the sequence is MKLNTIKPAEGAKHARRRVGRGIGSGLGKTGGRGHKGQKSRAGGFHKVGFEGGQ. Residues 21–31 are compositionally biased toward gly residues; the sequence is RGIGSGLGKTG.

This sequence belongs to the universal ribosomal protein uL15 family. In terms of assembly, part of the 50S ribosomal subunit.

Binds to the 23S rRNA. This chain is Large ribosomal subunit protein uL15, found in Methylobacillus flagellatus (strain ATCC 51484 / DSM 6875 / VKM B-1610 / KT).